A 520-amino-acid polypeptide reads, in one-letter code: Probable cytochrome P450 6v1 (520 aa).

C465 contacts heme.

This sequence belongs to the cytochrome P450 family. The cofactor is heme.

It is found in the endoplasmic reticulum membrane. Its subcellular location is the microsome membrane. Its function is as follows. May be involved in the metabolism of insect hormones and in the breakdown of synthetic insecticides. This chain is Probable cytochrome P450 6v1 (Cyp6v1), found in Drosophila melanogaster (Fruit fly).